Here is a 345-residue protein sequence, read N- to C-terminus: Putative pyridoxal reductase (345 aa).

The active-site Proton donor is the Y60.

The protein belongs to the aldo/keto reductase family.

The protein resides in the cytoplasm. The protein localises to the nucleus. The catalysed reaction is pyridoxine + NADP(+) = pyridoxal + NADPH + H(+). Its pathway is cofactor degradation; B6 vitamer degradation; pyridoxal from pyridoxine (dehydrogenase route): step 1/1. Its function is as follows. Catalyzes the reduction of pyridoxal (PL) with NADPH and oxidation of pyridoxine (PN) with NADP(+). The chain is Putative pyridoxal reductase from Saccharomyces cerevisiae (strain ATCC 204508 / S288c) (Baker's yeast).